The chain runs to 128 residues: Elongation factor G (128 aa).

This sequence belongs to the GTP-binding elongation factor family. EF-G/EF-2 subfamily.

The protein localises to the cytoplasm. Its function is as follows. Catalyzes the GTP-dependent ribosomal translocation step during translation elongation. During this step, the ribosome changes from the pre-translocational (PRE) to the post-translocational (POST) state as the newly formed A-site-bound peptidyl-tRNA and P-site-bound deacylated tRNA move to the P and E sites, respectively. Catalyzes the coordinated movement of the two tRNA molecules, the mRNA and conformational changes in the ribosome. This chain is Elongation factor G (fusA), found in Planobispora rosea.